A 311-amino-acid polypeptide reads, in one-letter code: Methionyl-tRNA formyltransferase (311 aa).

110–113 provides a ligand contact to (6S)-5,6,7,8-tetrahydrofolate; it reads SLLP.

It belongs to the Fmt family.

It carries out the reaction L-methionyl-tRNA(fMet) + (6R)-10-formyltetrahydrofolate = N-formyl-L-methionyl-tRNA(fMet) + (6S)-5,6,7,8-tetrahydrofolate + H(+). Its function is as follows. Attaches a formyl group to the free amino group of methionyl-tRNA(fMet). The formyl group appears to play a dual role in the initiator identity of N-formylmethionyl-tRNA by promoting its recognition by IF2 and preventing the misappropriation of this tRNA by the elongation apparatus. In Streptococcus pyogenes serotype M2 (strain MGAS10270), this protein is Methionyl-tRNA formyltransferase.